Reading from the N-terminus, the 191-residue chain is Small ribosomal subunit protein uS7 (191 aa).

Residues 56-80 (NKSGEQGDGDGESGGKAGGIKKRSL) are disordered.

This sequence belongs to the universal ribosomal protein uS7 family. In terms of assembly, part of the 30S ribosomal subunit. Contacts proteins S9 and S11.

Its function is as follows. One of the primary rRNA binding proteins, it binds directly to 16S rRNA where it nucleates assembly of the head domain of the 30S subunit. Is located at the subunit interface close to the decoding center, probably blocks exit of the E-site tRNA. This is Small ribosomal subunit protein uS7 from Coxiella burnetii (strain CbuK_Q154) (Coxiella burnetii (strain Q154)).